The chain runs to 314 residues: tRNA dimethylallyltransferase (314 aa).

12 to 19 (GPTASGKT) contributes to the ATP binding site. Residue 14–19 (TASGKT) participates in substrate binding. 3 interaction with substrate tRNA regions span residues 37–40 (DSAL), 161–165 (QRIQR), and 244–249 (RCVGYR).

This sequence belongs to the IPP transferase family. As to quaternary structure, monomer. Mg(2+) serves as cofactor.

The enzyme catalyses adenosine(37) in tRNA + dimethylallyl diphosphate = N(6)-dimethylallyladenosine(37) in tRNA + diphosphate. Its function is as follows. Catalyzes the transfer of a dimethylallyl group onto the adenine at position 37 in tRNAs that read codons beginning with uridine, leading to the formation of N6-(dimethylallyl)adenosine (i(6)A). This chain is tRNA dimethylallyltransferase, found in Janthinobacterium sp. (strain Marseille) (Minibacterium massiliensis).